We begin with the raw amino-acid sequence, 564 residues long: Proline--tRNA ligase (564 aa).

This sequence belongs to the class-II aminoacyl-tRNA synthetase family. ProS type 1 subfamily. Homodimer.

The protein localises to the cytoplasm. It carries out the reaction tRNA(Pro) + L-proline + ATP = L-prolyl-tRNA(Pro) + AMP + diphosphate. Functionally, catalyzes the attachment of proline to tRNA(Pro) in a two-step reaction: proline is first activated by ATP to form Pro-AMP and then transferred to the acceptor end of tRNA(Pro). As ProRS can inadvertently accommodate and process non-cognate amino acids such as alanine and cysteine, to avoid such errors it has two additional distinct editing activities against alanine. One activity is designated as 'pretransfer' editing and involves the tRNA(Pro)-independent hydrolysis of activated Ala-AMP. The other activity is designated 'posttransfer' editing and involves deacylation of mischarged Ala-tRNA(Pro). The misacylated Cys-tRNA(Pro) is not edited by ProRS. The polypeptide is Proline--tRNA ligase (Xanthomonas oryzae pv. oryzae (strain KACC10331 / KXO85)).